The primary structure comprises 152 residues: Deoxyuridine 5'-triphosphate nucleotidohydrolase (152 aa).

Substrate is bound by residues 63–65 (RSG), Asn76, and 80–82 (TID). A disordered region spans residues 129-152 (LDDTERGQGGYGSTGVSAMPPVDG).

This sequence belongs to the dUTPase family. Requires Mg(2+) as cofactor.

The enzyme catalyses dUTP + H2O = dUMP + diphosphate + H(+). It participates in pyrimidine metabolism; dUMP biosynthesis; dUMP from dCTP (dUTP route): step 2/2. Functionally, this enzyme is involved in nucleotide metabolism: it produces dUMP, the immediate precursor of thymidine nucleotides and it decreases the intracellular concentration of dUTP so that uracil cannot be incorporated into DNA. This chain is Deoxyuridine 5'-triphosphate nucleotidohydrolase, found in Cutibacterium acnes (strain DSM 16379 / KPA171202) (Propionibacterium acnes).